The chain runs to 149 residues: Deoxyuridine 5'-triphosphate nucleotidohydrolase (149 aa).

Substrate-binding positions include 68-70 (RSG), asparagine 81, 85-87 (LID), and methionine 95.

It belongs to the dUTPase family. Mg(2+) is required as a cofactor.

It catalyses the reaction dUTP + H2O = dUMP + diphosphate + H(+). It functions in the pathway pyrimidine metabolism; dUMP biosynthesis; dUMP from dCTP (dUTP route): step 2/2. In terms of biological role, this enzyme is involved in nucleotide metabolism: it produces dUMP, the immediate precursor of thymidine nucleotides and it decreases the intracellular concentration of dUTP so that uracil cannot be incorporated into DNA. The polypeptide is Deoxyuridine 5'-triphosphate nucleotidohydrolase (Albidiferax ferrireducens (strain ATCC BAA-621 / DSM 15236 / T118) (Rhodoferax ferrireducens)).